Here is a 404-residue protein sequence, read N- to C-terminus: Caspase b (404 aa).

A propeptide spanning residues 1 to 171 is cleaved from the precursor; sequence MEDITQLLSD…DIYTPRSGTQ (171 aa). The Pyrin domain occupies 8-80; sequence LSDVLEDLVE…LRKIKQNERA (73 aa). Active-site residues include His-249 and Cys-296. Positions 301–316 are excised as a propeptide; that stretch reads SSGVLAQDSVFASDSW.

Belongs to the peptidase C14A family. As to quaternary structure, upon direct LPS-binding, forms large homooligomers, resulting in its activation. These oligomers are often referred to as 'non-canonical inflammasomes'. Heterotetramer that consists of two anti-parallel arranged heterodimers, each one formed by a 20 kDa (p20) and a 10 kDa (p10) subunit. Interacts with caspa. Interacts with pycard; the interaction only occurs in the presence of nlrp1. Component of NLRP1 inflammasomes. Inflammasomes are supramolecular complexes that assemble in the cytosol in response to pathogens and other damage-associated signals and play critical roles in innate immunity and inflammation. The NLRP1 inflammasome is composed of the signal sensor nlrp1, and the adapter pycard (asc), which recruit effector pro-inflammatory caspases caspa and/or caspb. The interaction between nlrp1 and pycard is required for the sequential recruitment of caspa and then caspb. Caspa is preferentially recruited first and this causes the cleavage of pro-il1b into the midformed il1b. This is followed by the recruitment of caspb, which is activated and cleaves the midformed il1b resulting in il1b maturation. Post-translationally, the two subunits are derived from the precursor sequence by an autocatalytic mechanism. In terms of tissue distribution, expressed in the spleen, kidney and liver, and highly expressed in the gills and gut.

Its subcellular location is the inflammasome. It localises to the cytoplasm. It catalyses the reaction Strict requirement for Asp at the P1 position. It has a preferred cleavage sequence of Tyr-Val-Ala-Asp-|- but also cleaves at Asp-Glu-Val-Asp-|-.. Its activity is regulated as follows. Activated by homooligomerization induced by direct binding to cytosolic LPS. In terms of biological role, thiol protease which cleaves IL-1 beta (il1b), releasing the mature cytokine which is involved in a variety of inflammatory processes, and mediates apoptosis. Component of the NLRP1 inflammasome, which plays a crucial role in innate immunity and inflammation. In response to pathogens and other damage-associated signals, recruited to the NLRP1 inflammasome in its precursor form following the recruitment of caspase caspa. Its subsequent activation causes the cleavage of the midformed pro-il1b and results in il1b maturation and secretion in the extracellular milieu. Activated by direct binding to bacterial lipopolysaccharides (LPS), which causes non-canonical inflammasome activation and results in the pyroptosis of infected cells and their extrusion into the gut lumen, as well as in cytokine secretion. Plays a crucial role in the restriction of bacterial infection to intestinal sites. Pyroptosis limits bacterial replication, while cytokine secretion promotes the recruitment and activation of immune cells and triggers mucosal inflammation. Promotes pyroptosis by bacterial infection by E.piscicida. The chain is Caspase b from Danio rerio (Zebrafish).